The chain runs to 172 residues: Biogenesis of lysosome-related organelles complex 1 subunit 6 (172 aa).

Over residues 1-10 the composition is skewed to pro residues; that stretch reads MNVPVPPPPD. Disordered regions lie at residues 1–35 and 136–172; these read MNVP…RSPD and ALKL…AKRT. Basic and acidic residues predominate over residues 143–164; the sequence is RQKEELEREQQREREFEREKQL.

The protein belongs to the BLOC1S6 family. In terms of assembly, homodimer. Octamer composed of one copy each BLOC1S1, BLOC1S2, BLOC1S3, BLOC1S4, BLOC1S5, BLOC1S6, DTNBP1/BLOC1S7 and SNAPIN/BLOC1S8. The BLOC-1 complex associates with the AP-3 protein complex and membrane protein cargos. Interacts with BLOC1S4, BLOC1S5, DTNBP1/BLOC1S7, F-actin, SNAP25 isoform 1 and isoform 2, SNAP47 and STX12. Component of the biogenesis of lysosome-related organelles complex 1 (BLOC-1) composed of BLOC1S1, BLOC1S2, BLOC1S3, BLOC1S4, BLOC1S5, BLOC1S6, DTNBP1/BLOC1S7 and SNAPIN/BLOC1S8.

Its subcellular location is the cytoplasm. It is found in the membrane. In terms of biological role, component of the BLOC-1 complex, a complex that is required for normal biogenesis of lysosome-related organelles (LRO), such as platelet dense granules and melanosomes. In concert with the AP-3 complex, the BLOC-1 complex is required to target membrane protein cargos into vesicles assembled at cell bodies for delivery into neurites and nerve terminals. The BLOC-1 complex, in association with SNARE proteins, is also proposed to be involved in neurite extension. May play a role in intracellular vesicle trafficking, particularly in the vesicle-docking and fusion process. This is Biogenesis of lysosome-related organelles complex 1 subunit 6 (Bloc1s6) from Rattus norvegicus (Rat).